The sequence spans 169 residues: Deoxyuridine 5'-triphosphate nucleotidohydrolase (169 aa).

Residues 1 to 10 show a composition bias toward polar residues; it reads MAENQINSPE. Positions 1–25 are disordered; the sequence is MAENQINSPEITEPSPKVQKLDHPE. Substrate-binding positions include 91 to 93, 105 to 108, Gly116, Arg159, and 164 to 165; these read RSG, GVID, and FG.

The protein belongs to the dUTPase family. As to quaternary structure, homodimer. Requires Mg(2+) as cofactor. As to expression, vegetative and floral merismatic cells and provascular and vascular merismatic derivatives.

The catalysed reaction is dUTP + H2O = dUMP + diphosphate + H(+). Its pathway is pyrimidine metabolism; dUMP biosynthesis; dUMP from dCTP (dUTP route): step 2/2. In terms of biological role, this enzyme is involved in nucleotide metabolism: it produces dUMP, the immediate precursor of thymidine nucleotides and it decreases the intracellular concentration of dUTP so that uracil cannot be incorporated into DNA. It may have as well a metabolic role in merismatic cells. In Solanum lycopersicum (Tomato), this protein is Deoxyuridine 5'-triphosphate nucleotidohydrolase.